Reading from the N-terminus, the 244-residue chain is Tabinhibitin 8 (244 aa).

A signal peptide spans 1-23; sequence MTSILVSRFKISALTLQYATSDS. The 128-residue stretch at 67-194 folds into the SCP domain; sequence YTGGGIIVLR…KTPLFFSSNC (128 aa). The Cell attachment site signature appears at 143–145; it reads RGD.

This sequence belongs to the CRISP family. Expressed in salivary glands.

The protein localises to the secreted. Its function is as follows. Inhibits platelet aggregation induced by all agonists tested (ADP, arachidonic acid, the thromboxane A2 analog U46619, thrombin, and snake venom snaclecs (TMVA that activates platelet through GPIB, and stejnulxin that specifically acts through GPVI (GP6))). May act by competing with fibrinogen for binding to glycoprotein IIb/IIIa (ITGA2B/ITGB3). This is Tabinhibitin 8 from Tabanus yao (Horsefly).